The sequence spans 60 residues: Arabinogalactan protein 12 (60 aa).

The first 27 residues, 1 to 27 (MESMKMKLIVVLMVAIVAFSAVGNVAA), serve as a signal peptide directing secretion. Gln28 carries the pyrrolidone carboxylic acid modification. 4-hydroxyproline is present on residues Pro32, Pro34, and Pro36. O-linked (Ara...) hydroxyproline glycans are attached at residues Pro32, Pro34, and Pro36. The GPI-anchor amidated serine moiety is linked to residue Ser38. Positions 39 to 60 (DAAMFVPALFASVAALASGFLF) are cleaved as a propeptide — removed in mature form.

The protein belongs to the AG-peptide AGP family. Post-translationally, contains 4-hydroxyproline; hydroxylated on Pro-32, Pro-34 and Pro-36. O-glycosylated on hydroxyprolines; noncontiguous hydroxylproline residues are glycosylated with arabinogalactan. In terms of tissue distribution, expressed in reproductive tissues. Expressed in chalaza, funiculus, stigma, septum, style and transmitting tract.

Its subcellular location is the cell membrane. Its function is as follows. Proteoglycan that seems to be implicated in diverse developmental roles such as differentiation, cell-cell recognition, embryogenesis and programmed cell death. The sequence is that of Arabinogalactan protein 12 from Arabidopsis thaliana (Mouse-ear cress).